Here is a 363-residue protein sequence, read N- to C-terminus: UDP-3-O-acylglucosamine N-acyltransferase (363 aa).

Catalysis depends on histidine 239, which acts as the Proton acceptor. Residues 342–363 (LSEMKKEVEKEKESSREKEETK) are disordered.

This sequence belongs to the transferase hexapeptide repeat family. LpxD subfamily. As to quaternary structure, homotrimer.

The enzyme catalyses a UDP-3-O-[(3R)-3-hydroxyacyl]-alpha-D-glucosamine + a (3R)-hydroxyacyl-[ACP] = a UDP-2-N,3-O-bis[(3R)-3-hydroxyacyl]-alpha-D-glucosamine + holo-[ACP] + H(+). It functions in the pathway bacterial outer membrane biogenesis; LPS lipid A biosynthesis. In terms of biological role, catalyzes the N-acylation of UDP-3-O-acylglucosamine using 3-hydroxyacyl-ACP as the acyl donor. Is involved in the biosynthesis of lipid A, a phosphorylated glycolipid that anchors the lipopolysaccharide to the outer membrane of the cell. This is UDP-3-O-acylglucosamine N-acyltransferase from Syntrophus aciditrophicus (strain SB).